A 142-amino-acid chain; its full sequence is Alpha-lactalbumin (142 aa).

The first 18 residues, 1-18 (MMSFVSLLLVGILFHATQ), serve as a signal peptide directing secretion. The region spanning 20–142 (EQLTKCEVFR…KLDQWLCEKL (123 aa)) is the C-type lysozyme domain. 4 disulfides stabilise this stretch: Cys25–Cys139, Cys47–Cys130, Cys80–Cys96, and Cys92–Cys110. Residues Asn64 and Asn93 are each glycosylated (N-linked (GlcNAc...) asparagine). Ca(2+)-binding residues include Lys98, Asp101, Asp103, Asp106, and Asp107.

This sequence belongs to the glycosyl hydrolase 22 family. Lactose synthase (LS) is a heterodimer of a catalytic component, beta1,4-galactosyltransferase (beta4Gal-T1) and a regulatory component, alpha-lactalbumin (LA). In terms of tissue distribution, mammary gland specific. Secreted in milk.

The protein localises to the secreted. In terms of biological role, regulatory subunit of lactose synthase, changes the substrate specificity of galactosyltransferase in the mammary gland making glucose a good acceptor substrate for this enzyme. This enables LS to synthesize lactose, the major carbohydrate component of milk. In other tissues, galactosyltransferase transfers galactose onto the N-acetylglucosamine of the oligosaccharide chains in glycoproteins. The sequence is that of Alpha-lactalbumin (LALBA) from Bubalus bubalis (Domestic water buffalo).